We begin with the raw amino-acid sequence, 134 residues long: T-cell receptor beta chain V region CTL-F3 (134 aa).

An N-terminal signal peptide occupies residues 1–19 (MAPRLLFCLVLCFLRAEPT). The v segment stretch occupies residues 20 to 115 (NAGVIQTPRH…SAVYLCASSL (96 aa)). Cysteines 42 and 111 form a disulfide. Residue Asn90 is glycosylated (N-linked (GlcNAc...) asparagine). Residues 116-119 (STGV) form a d segment region. Positions 120–134 (SYEQYFGPGTRLTVL) are j segment.

This is T-cell receptor beta chain V region CTL-F3 from Mus musculus (Mouse).